The primary structure comprises 456 residues: Tyrosine phenol-lyase (456 aa).

Lysine 257 is modified (N6-(pyridoxal phosphate)lysine).

Belongs to the beta-eliminating lyase family. In terms of assembly, homotetramer. The cofactor is pyridoxal 5'-phosphate. In terms of processing, contains L-DOPA (3',4'-dihydroxyphenylalanine).

It localises to the cytoplasm. The catalysed reaction is L-tyrosine + H2O = phenol + pyruvate + NH4(+). The chain is Tyrosine phenol-lyase (tpl) from Enterobacter agglomerans (Erwinia herbicola).